The chain runs to 562 residues: Delta-1-pyrroline-5-carboxylate dehydrogenase, mitochondrial (562 aa).

The N-terminal 23 residues, 1–23, are a transit peptide targeting the mitochondrion; sequence MLPLPSLRRSLLSHAWRGAGLRW. Lysine 30 is subject to N6-succinyllysine. At serine 43 the chain carries Phosphoserine. Residue lysine 51 is modified to N6-acetyllysine. N6-acetyllysine; alternate is present on residues lysine 92, lysine 98, lysine 113, lysine 129, and lysine 174. N6-succinyllysine; alternate occurs at positions 92, 98, 113, 129, and 174. NAD(+)-binding positions include serine 207, lysine 232, and 285-289; that span reads GSVPT. Residue glutamate 313 is the Proton acceptor of the active site. The residue at position 317 (lysine 317) is an N6-acetyllysine. Residue lysine 346 is modified to N6-succinyllysine. Cysteine 347 serves as the catalytic Nucleophile. Lysine 357 carries the N6-acetyllysine; alternate modification. Lysine 357 is modified (N6-succinyllysine; alternate). Lysine 364 and lysine 375 each carry N6-acetyllysine. The residue at position 394 (lysine 394) is an N6-succinyllysine. Glutamate 446 is a binding site for NAD(+). At lysine 461 the chain carries N6-acetyllysine. Lysine 508 bears the N6-acetyllysine; alternate mark. Lysine 508 is modified (N6-succinyllysine; alternate). Serine 512 contributes to the substrate binding site. N6-acetyllysine is present on residues lysine 530 and lysine 551.

The protein belongs to the aldehyde dehydrogenase family. Homodimer. In terms of processing, acetylation of Lys-98, Lys-113 and Lys-401 is observed in liver mitochondria from fasted mice but not from fed mice.

The protein resides in the mitochondrion matrix. The catalysed reaction is L-glutamate 5-semialdehyde + NAD(+) + H2O = L-glutamate + NADH + 2 H(+). It participates in amino-acid degradation; L-proline degradation into L-glutamate; L-glutamate from L-proline: step 2/2. Functionally, irreversible conversion of delta-1-pyrroline-5-carboxylate (P5C), derived either from proline or ornithine, to glutamate. This is a necessary step in the pathway interconnecting the urea and tricarboxylic acid cycles. The preferred substrate is glutamic gamma-semialdehyde, other substrates include succinic, glutaric and adipic semialdehydes. This chain is Delta-1-pyrroline-5-carboxylate dehydrogenase, mitochondrial (Aldh4a1), found in Mus musculus (Mouse).